Here is a 204-residue protein sequence, read N- to C-terminus: Urease accessory protein UreG (204 aa).

11 to 18 (GPVGAGKT) is a GTP binding site.

This sequence belongs to the SIMIBI class G3E GTPase family. UreG subfamily. Homodimer. UreD, UreF and UreG form a complex that acts as a GTP-hydrolysis-dependent molecular chaperone, activating the urease apoprotein by helping to assemble the nickel containing metallocenter of UreC. The UreE protein probably delivers the nickel.

It localises to the cytoplasm. Facilitates the functional incorporation of the urease nickel metallocenter. This process requires GTP hydrolysis, probably effectuated by UreG. The sequence is that of Urease accessory protein UreG from Staphylococcus saprophyticus subsp. saprophyticus (strain ATCC 15305 / DSM 20229 / NCIMB 8711 / NCTC 7292 / S-41).